A 578-amino-acid chain; its full sequence is Isocitrate dehydrogenase kinase/phosphatase (578 aa).

ATP-binding positions include 315–321 (APGIRGM) and Lys336. Asp371 is a catalytic residue.

This sequence belongs to the AceK family.

It localises to the cytoplasm. It catalyses the reaction L-seryl-[isocitrate dehydrogenase] + ATP = O-phospho-L-seryl-[isocitrate dehydrogenase] + ADP + H(+). In terms of biological role, bifunctional enzyme which can phosphorylate or dephosphorylate isocitrate dehydrogenase (IDH) on a specific serine residue. This is a regulatory mechanism which enables bacteria to bypass the Krebs cycle via the glyoxylate shunt in response to the source of carbon. When bacteria are grown on glucose, IDH is fully active and unphosphorylated, but when grown on acetate or ethanol, the activity of IDH declines drastically concomitant with its phosphorylation. The chain is Isocitrate dehydrogenase kinase/phosphatase from Escherichia coli O157:H7.